We begin with the raw amino-acid sequence, 252 residues long: MAEELGLGFGEGVPVEVLPEGCRHRPEARAGLAARSKACLALTCCLLSFPILAGLSTLLMAGQLRVPGKDCMLRAITEERSEPSPQQVYSPPRGKPRAHLTIKKQTPAPHLKNQLSALHWEHDLGMAFTKNGMKYINKSLVIPESGDYFIYSQITFRGTTSVCGDISRGRRPNKPDSITVVITKVADSYPEPARLLTGSKSVCEISNNWFQSLYLGAMFSLEEGDRLMVNVSDISLVDYTKEDKTFFGAFLL.

Over 1-39 (MAEELGLGFGEGVPVEVLPEGCRHRPEARAGLAARSKAC) the chain is Cytoplasmic. The chain crosses the membrane as a helical; Signal-anchor for type II membrane protein span at residues 40–60 (LALTCCLLSFPILAGLSTLLM). The Extracellular segment spans residues 61–252 (AGQLRVPGKD…DKTFFGAFLL (192 aa)). Residues 96–252 (PRAHLTIKKQ…DKTFFGAFLL (157 aa)) form the THD domain. Asparagine 137 is a glycosylation site (N-linked (GlcNAc...) asparagine). Cysteine 163 and cysteine 203 are disulfide-bonded. Asparagine 230 carries N-linked (GlcNAc...) asparagine glycosylation.

It belongs to the tumor necrosis factor family. Homotrimer.

The protein resides in the membrane. Receptor for TNFRSF25 and TNFRSF6B. Mediates activation of NF-kappa-B. Inhibits vascular endothelial growth and angiogenesis (in vitro). Promotes activation of caspases and apoptosis. Promotes splenocyte alloactivation. The protein is Tumor necrosis factor ligand superfamily member 15 (Tnfsf15) of Mus musculus (Mouse).